A 726-amino-acid chain; its full sequence is Catalase-peroxidase (726 aa).

The segment covering 1–13 (MSMSEETNNSLSS) has biased composition (polar residues). The segment at 1 to 34 (MSMSEETNNSLSSGKCPFHHGGSDQSAGEGTGSR) is disordered. Residues 105-226 (WHGAGTYRSV…LAATEMGLIY (122 aa)) constitute a cross-link (tryptophyl-tyrosyl-methioninium (Trp-Tyr) (with M-252)). The Proton acceptor role is filled by His-106. The tryptophyl-tyrosyl-methioninium (Tyr-Met) (with W-105) cross-link spans 226–252 (YVNPEGPNASGEPLSAAAAIRATFGNM). Position 267 (His-267) interacts with heme b.

Belongs to the peroxidase family. Peroxidase/catalase subfamily. Homodimer or homotetramer. Heme b serves as cofactor. Post-translationally, formation of the three residue Trp-Tyr-Met cross-link is important for the catalase, but not the peroxidase activity of the enzyme.

It carries out the reaction H2O2 + AH2 = A + 2 H2O. The catalysed reaction is 2 H2O2 = O2 + 2 H2O. Its function is as follows. Bifunctional enzyme with both catalase and broad-spectrum peroxidase activity. The protein is Catalase-peroxidase of Enterobacter sp. (strain 638).